Reading from the N-terminus, the 475-residue chain is Ribulose bisphosphate carboxylase large chain (475 aa).

A propeptide spanning residues 1-2 (MS) is cleaved from the precursor. P3 is subject to N-acetylproline. An N6,N6,N6-trimethyllysine modification is found at K14. 2 residues coordinate substrate: N123 and T173. The Proton acceptor role is filled by K175. K177 serves as a coordination point for substrate. Residues K201, D203, and E204 each coordinate Mg(2+). Position 201 is an N6-carboxylysine (K201). H294 acts as the Proton acceptor in catalysis. Residues R295, H327, and S379 each coordinate substrate.

Belongs to the RuBisCO large chain family. Type I subfamily. Heterohexadecamer of 8 large chains and 8 small chains; disulfide-linked. The disulfide link is formed within the large subunit homodimers. Mg(2+) is required as a cofactor. Post-translationally, the disulfide bond which can form in the large chain dimeric partners within the hexadecamer appears to be associated with oxidative stress and protein turnover.

It localises to the plastid. The protein resides in the chloroplast. It catalyses the reaction 2 (2R)-3-phosphoglycerate + 2 H(+) = D-ribulose 1,5-bisphosphate + CO2 + H2O. The catalysed reaction is D-ribulose 1,5-bisphosphate + O2 = 2-phosphoglycolate + (2R)-3-phosphoglycerate + 2 H(+). RuBisCO catalyzes two reactions: the carboxylation of D-ribulose 1,5-bisphosphate, the primary event in carbon dioxide fixation, as well as the oxidative fragmentation of the pentose substrate in the photorespiration process. Both reactions occur simultaneously and in competition at the same active site. The polypeptide is Ribulose bisphosphate carboxylase large chain (Atriplex rosea (Red orache)).